A 375-amino-acid polypeptide reads, in one-letter code: Aminomethyltransferase (375 aa).

It belongs to the GcvT family. The glycine cleavage system is composed of four proteins: P, T, L and H.

The catalysed reaction is N(6)-[(R)-S(8)-aminomethyldihydrolipoyl]-L-lysyl-[protein] + (6S)-5,6,7,8-tetrahydrofolate = N(6)-[(R)-dihydrolipoyl]-L-lysyl-[protein] + (6R)-5,10-methylene-5,6,7,8-tetrahydrofolate + NH4(+). Functionally, the glycine cleavage system catalyzes the degradation of glycine. In Cupriavidus pinatubonensis (strain JMP 134 / LMG 1197) (Cupriavidus necator (strain JMP 134)), this protein is Aminomethyltransferase.